Here is a 568-residue protein sequence, read N- to C-terminus: N66 matrix protein (568 aa).

An N-terminal signal peptide occupies residues 1–22 (MWRMTTLLHLTALLVLIPLCHC). In terms of domain architecture, Alpha-carbonic anhydrase spans 55 to 567 (AGFSYNRDIC…KHPLRVYKNS (513 aa)). Positions 154, 156, and 179 each coordinate Zn(2+). Residues 259–421 (NGNNGNNGNG…NGYNGDNGNS (163 aa)) are disordered. The segment covering 280-290 (GNNGNGNGNNG) has biased composition (gly residues). Residues 291 to 318 (YNGNNGYNGNNGNNGNGNNDNNGNDNNG) show a composition bias toward low complexity. 2 stretches are compositionally biased toward gly residues: residues 319–352 (NNGGNGNNGNNGNGNNGNNGNGNNGNNGGNGNNG) and 362–380 (NGNGNNGNNGGNGNNGNNG). An N-linked (GlcNAc...) asparagine glycan is attached at N389. A compositionally biased stretch (gly residues) spans 390–413 (GSNGNNGGNGNNGNNGDNGNGDNG). 506 to 507 (TT) contributes to the substrate binding site. N-linked (GlcNAc...) asparagine glycosylation occurs at N511.

It belongs to the alpha-carbonic anhydrase family. As to quaternary structure, homooligomer; disulfide-linked. May also be disulfide-linked to insoluble organic matrix. Zn(2+) is required as a cofactor. As to expression, expressed in both the dorsal region of the mantle and the mantle edge. Is dispersed in calcium carbonate and also linked by disulfide bonds to the organic core of nacre.

The protein localises to the secreted. The protein resides in the extracellular space. Its subcellular location is the extracellular matrix. It catalyses the reaction hydrogencarbonate + H(+) = CO2 + H2O. Its function is as follows. Acts as a negative regulator for calcification in the shells of mollusks. May function both as a calcium concentrator and as a carbonic anhydrase required for production of carbonate ions, which are assembled to CaCO(3) at mineralization sites. Is important for shell formation in both the calcitic prismatic layer and the aragonitic nacreous layer. The sequence is that of N66 matrix protein from Pinctada maxima (Silver-lipped pearl oyster).